Consider the following 78-residue polypeptide: MICOS complex subunit MIC10 (78 aa).

N-acetylserine is present on Ser-2. A helical membrane pass occupies residues 17–36 (AVVKIGTGFGLGIVFSLTFF). Residues 37–78 (KRRMWPLAFGSGMGLGMAYSNCQHDFQAPYLLHGKYVKEQEQ) lie on the Mitochondrial intermembrane side of the membrane.

It belongs to the MICOS complex subunit Mic10 family. Component of the mitochondrial contact site and cristae organizing system (MICOS) complex, composed of at least MICOS10/MIC10, CHCHD3/MIC19, CHCHD6/MIC25, APOOL/MIC27, IMMT/MIC60, APOO/MIC23/MIC26 and MICOS13/MIC13. This complex was also known under the names MINOS or MitOS complex. The MICOS complex associates with mitochondrial outer membrane proteins SAMM50, MTX1 and MTX2 (together described as components of the mitochondrial outer membrane sorting assembly machinery (SAM) complex) and DNAJC11, mitochondrial inner membrane protein TMEM11 and with HSPA9. The MICOS and SAM complexes together with DNAJC11 are part of a large protein complex spanning both membranes termed the mitochondrial intermembrane space bridging (MIB) complex. Interacts with IMMT/MIC60 and MICOS13/MIC13. Interacts with APOO/MIC23/MIC26 and APOOL/MIC27. Interacts with ARMC1.

The protein localises to the mitochondrion inner membrane. Component of the MICOS complex, a large protein complex of the mitochondrial inner membrane that plays crucial roles in the maintenance of crista junctions, inner membrane architecture, and formation of contact sites to the outer membrane. The polypeptide is MICOS complex subunit MIC10 (Homo sapiens (Human)).